Consider the following 98-residue polypeptide: ESAT-6-like protein EsxK (98 aa).

The protein belongs to the WXG100 family. CFP-10 subfamily. As to quaternary structure, strongly interacts with EsxL to form a heterodimeric complex under reducing conditions.

It localises to the secreted. The sequence is that of ESAT-6-like protein EsxK from Mycobacterium tuberculosis (strain CDC 1551 / Oshkosh).